The chain runs to 136 residues: Small ribosomal subunit protein uS11c (136 aa).

Residues methionine 1–lysine 22 are disordered.

It belongs to the universal ribosomal protein uS11 family. Part of the 30S ribosomal subunit.

The protein localises to the plastid. It is found in the chloroplast. The sequence is that of Small ribosomal subunit protein uS11c from Lactuca sativa (Garden lettuce).